Reading from the N-terminus, the 310-residue chain is CRAL-TRIO domain-containing protein YKL091C (310 aa).

The CRAL-TRIO domain maps to 101-274; the sequence is ERIKLAKMYP…KYGGTSVLHN (174 aa).

The polypeptide is CRAL-TRIO domain-containing protein YKL091C (Saccharomyces cerevisiae (strain ATCC 204508 / S288c) (Baker's yeast)).